Reading from the N-terminus, the 153-residue chain is Ribosome maturation factor RimP (153 aa).

Belongs to the RimP family.

Its subcellular location is the cytoplasm. Functionally, required for maturation of 30S ribosomal subunits. The protein is Ribosome maturation factor RimP of Solibacter usitatus (strain Ellin6076).